A 97-amino-acid polypeptide reads, in one-letter code: Transcription and mRNA export factor SUS1 (97 aa).

The protein belongs to the ENY2 family. Component of the nuclear pore complex (NPC)-associated TREX-2 complex (transcription and export complex 2), composed of at least SUS1, SAC3, THP1, SEM1, and CDC31. TREX-2 contains 2 SUS1 chains. The TREX-2 complex interacts with the nucleoporin NUP1. Component of the 1.8 MDa SAGA transcription coactivator-HAT complex. SAGA is built of 5 distinct domains with specialized functions. Within the SAGA complex, SUS1, SGF11, SGF73 and UBP8 form an additional subcomplex of SAGA called the DUB module (deubiquitination module). Interacts directly with THP1, SAC3, SGF11, and with the RNA polymerase II.

The protein resides in the nucleus. Its subcellular location is the nucleoplasm. It localises to the cytoplasm. The protein localises to the P-body. Its function is as follows. Involved in mRNA export coupled transcription activation by association with both the TREX-2 and the SAGA complexes. At the promoters, SAGA is required for recruitment of the basal transcription machinery. It influences RNA polymerase II transcriptional activity through different activities such as TBP interaction and promoter selectivity, interaction with transcription activators, and chromatin modification through histone acetylation and deubiquitination. Within the SAGA complex, participates in a subcomplex required for deubiquitination of H2B and for the maintenance of steady-state H3 methylation levels. The TREX-2 complex functions in docking export-competent ribonucleoprotein particles (mRNPs) to the nuclear entrance of the nuclear pore complex (nuclear basket). TREX-2 participates in mRNA export and accurate chromatin positioning in the nucleus by tethering genes to the nuclear periphery. May also be involved in cytoplasmic mRNA decay by interaction with components of P-bodies. The polypeptide is Transcription and mRNA export factor SUS1 (Meyerozyma guilliermondii (strain ATCC 6260 / CBS 566 / DSM 6381 / JCM 1539 / NBRC 10279 / NRRL Y-324) (Yeast)).